The primary structure comprises 148 residues: Arginine repressor (148 aa).

It belongs to the ArgR family.

The protein localises to the cytoplasm. Its pathway is amino-acid biosynthesis; L-arginine biosynthesis [regulation]. In terms of biological role, regulates arginine biosynthesis genes. The protein is Arginine repressor of Chloroherpeton thalassium (strain ATCC 35110 / GB-78).